The sequence spans 393 residues: Ornithine decarboxylase 2 (393 aa).

N6-(pyridoxal phosphate)lysine is present on Lys62. Residues Ser194, Gly231, and 265–268 (EPGR) each bind pyridoxal 5'-phosphate. 314-315 (YY) contacts substrate. Residue Cys343 is the Proton donor; shared with dimeric partner of the active site. Asp344 is a binding site for substrate. Tyr371 contributes to the pyridoxal 5'-phosphate binding site.

Belongs to the Orn/Lys/Arg decarboxylase class-II family. In terms of assembly, homodimer. Only the dimer is catalytically active, as the active sites are constructed of residues from both monomers. Pyridoxal 5'-phosphate is required as a cofactor.

The catalysed reaction is L-ornithine + H(+) = putrescine + CO2. It functions in the pathway amine and polyamine biosynthesis; putrescine biosynthesis via L-ornithine pathway; putrescine from L-ornithine: step 1/1. Its activity is regulated as follows. Inhibited by antizyme (AZ) in response to polyamine levels. AZ inhibits the assembly of the functional homodimer by binding to ODC monomers and targeting them for ubiquitin-independent proteolytic destruction by the 26S proteasome. Its function is as follows. Catalyzes the first and rate-limiting step of polyamine biosynthesis that converts ornithine into putrescine, which is the precursor for the polyamines, spermidine and spermine. Polyamines are essential for cell proliferation and are implicated in cellular processes, ranging from DNA replication to apoptosis. This Drosophila melanogaster (Fruit fly) protein is Ornithine decarboxylase 2 (Odc2).